Reading from the N-terminus, the 463-residue chain is tRNA-2-methylthio-N(6)-dimethylallyladenosine synthase (463 aa).

An MTTase N-terminal domain is found at 19–135 (GSYWITTFGC…LESLLNQVDS (117 aa)). [4Fe-4S] cluster-binding residues include C28, C64, C98, C170, C174, and C177. Residues 156–393 (RDSSICGWVN…NSLVENIAKE (238 aa)) form the Radical SAM core domain. The TRAM domain maps to 396-463 (QRYKNTSQEI…RPFSLTAKLL (68 aa)).

The protein belongs to the methylthiotransferase family. MiaB subfamily. As to quaternary structure, monomer. [4Fe-4S] cluster serves as cofactor.

It localises to the cytoplasm. It carries out the reaction N(6)-dimethylallyladenosine(37) in tRNA + (sulfur carrier)-SH + AH2 + 2 S-adenosyl-L-methionine = 2-methylsulfanyl-N(6)-dimethylallyladenosine(37) in tRNA + (sulfur carrier)-H + 5'-deoxyadenosine + L-methionine + A + S-adenosyl-L-homocysteine + 2 H(+). Its function is as follows. Catalyzes the methylthiolation of N6-(dimethylallyl)adenosine (i(6)A), leading to the formation of 2-methylthio-N6-(dimethylallyl)adenosine (ms(2)i(6)A) at position 37 in tRNAs that read codons beginning with uridine. The protein is tRNA-2-methylthio-N(6)-dimethylallyladenosine synthase of Prochlorococcus marinus (strain NATL2A).